Reading from the N-terminus, the 399-residue chain is Salivary protein Tsal1 (399 aa).

A signal peptide spans Met-1 to Ala-22. Asn-268 carries an N-linked (GlcNAc...) asparagine glycan.

It belongs to the DNA/RNA non-specific endonuclease family. A divalent metal cation serves as cofactor. As to expression, saliva (at protein level).

Its subcellular location is the secreted. Binds double-stranded DNA (dsDNA) with high affinity. Binds double-stranded RNA. Binds single-stranded DNA with lower affinity and with a preference for purine-rich sequences. Shows residual nuclease activity for dsDNA. May facilitate blood meal intake by lowering the local viscosity created by the release of host DNA. This Glossina morsitans morsitans (Savannah tsetse fly) protein is Salivary protein Tsal1.